Reading from the N-terminus, the 81-residue chain is MKTLLLTLVVVTIVCLDLGYTLTCCNQQSSQPKTTTDCADDSCYKKTWKDHRGTRIERGCGCPQVKPGIKLECCKTNECNN.

Positions 1–21 (MKTLLLTLVVVTIVCLDLGYT) are cleaved as a signal peptide. Intrachain disulfides connect Cys24–Cys43, Cys38–Cys60, Cys62–Cys73, and Cys74–Cys79.

It belongs to the three-finger toxin family. Short-chain subfamily. Type I alpha-neurotoxin sub-subfamily. In terms of tissue distribution, expressed by the venom gland.

The protein localises to the secreted. Functionally, binds to muscle nicotinic acetylcholine receptor (nAChR) and inhibit acetylcholine from binding to the receptor, thereby impairing neuromuscular transmission. This is Short neurotoxin D from Aipysurus laevis (Olive sea snake).